The chain runs to 195 residues: Thymidine kinase (195 aa).

ATP is bound by residues 9-16 and 87-90; these read STMNAGKS and DEAQ. The Proton acceptor role is filled by Glu-88. Positions 145, 147, 182, and 185 each coordinate Zn(2+).

The protein belongs to the thymidine kinase family. Homotetramer.

It is found in the cytoplasm. The enzyme catalyses thymidine + ATP = dTMP + ADP + H(+). This is Thymidine kinase from Mannheimia succiniciproducens (strain KCTC 0769BP / MBEL55E).